A 292-amino-acid chain; its full sequence is uncharacterized protein (292 aa).

Residues serine 44 and tyrosine 106 each act as charge relay system in the active site. The active-site Proton donor is the tyrosine 132. The active-site Schiff-base intermediate with substrate is the lysine 161.

It belongs to the DapA family. As to quaternary structure, homotetramer.

The protein localises to the cytoplasm. This is an uncharacterized protein from Thermoplasma acidophilum (strain ATCC 25905 / DSM 1728 / JCM 9062 / NBRC 15155 / AMRC-C165).